A 198-amino-acid chain; its full sequence is dCTP deaminase, dUMP-forming (198 aa).

Residues 115 to 120, Asp-133, 141 to 143, Gln-162, Tyr-175, and Lys-184 contribute to the dCTP site; these read KSSIAR and TLE. The active-site Proton donor/acceptor is Glu-143.

The protein belongs to the dCTP deaminase family. In terms of assembly, homotrimer.

The catalysed reaction is dCTP + 2 H2O = dUMP + NH4(+) + diphosphate. The protein operates within pyrimidine metabolism; dUMP biosynthesis; dUMP from dCTP: step 1/1. Functionally, bifunctional enzyme that catalyzes both the deamination of dCTP to dUTP and the hydrolysis of dUTP to dUMP without releasing the toxic dUTP intermediate. This chain is dCTP deaminase, dUMP-forming, found in Nanoarchaeum equitans (strain Kin4-M).